The sequence spans 138 residues: MSAAPLDPRGHGDPDVDGILARASFADDGLLPAVIQQHDTREVLMLGYMDREALRRTLTTGRVTFWSRSRSEYWRKGDTSGHGQYVRDAALDCDGDTVLVQVDQVGVACHTGTRTCFDADHLHPVTGARPAADEGPTP.

Aspartate 92 provides a ligand contact to Mg(2+). Cysteine 93 is a Zn(2+) binding site. Mg(2+)-binding residues include aspartate 94 and aspartate 96. Positions 109 and 116 each coordinate Zn(2+).

The protein belongs to the PRA-CH family. Homodimer. Requires Mg(2+) as cofactor. The cofactor is Zn(2+).

It localises to the cytoplasm. It catalyses the reaction 1-(5-phospho-beta-D-ribosyl)-5'-AMP + H2O = 1-(5-phospho-beta-D-ribosyl)-5-[(5-phospho-beta-D-ribosylamino)methylideneamino]imidazole-4-carboxamide. It functions in the pathway amino-acid biosynthesis; L-histidine biosynthesis; L-histidine from 5-phospho-alpha-D-ribose 1-diphosphate: step 3/9. Its function is as follows. Catalyzes the hydrolysis of the adenine ring of phosphoribosyl-AMP. The chain is Phosphoribosyl-AMP cyclohydrolase from Clavibacter sepedonicus (Clavibacter michiganensis subsp. sepedonicus).